Reading from the N-terminus, the 229-residue chain is Aquaporin Z (229 aa).

A run of 2 helical transmembrane segments spans residues 8 to 28 and 33 to 53; these read FFGTFWLVLGGCGSAVLAAGV and IGYLGVALAFGLSVLTMAYAI. The NPA 1 signature appears at 62–64; it reads NPA. 3 helical membrane-spanning segments follow: residues 81–101, 131–151, and 158–178; these read LPYVVAQVLGGLAAGGVLYLI, AALVSEVVLTGMFLLIILGAT, and GFAPIAIGLTLTLIHLISIPV. The NPA 2 motif lies at 184–186; that stretch reads NPA. A helical transmembrane segment spans residues 199–219; it reads AVSQLWLFWVAPILGAVLGAL.

It belongs to the MIP/aquaporin (TC 1.A.8) family. Homotetramer.

The protein resides in the cell inner membrane. The enzyme catalyses H2O(in) = H2O(out). Functionally, channel that permits osmotically driven movement of water in both directions. It is involved in the osmoregulation and in the maintenance of cell turgor during volume expansion in rapidly growing cells. It mediates rapid entry or exit of water in response to abrupt changes in osmolarity. The protein is Aquaporin Z of Pseudomonas aeruginosa (strain ATCC 15692 / DSM 22644 / CIP 104116 / JCM 14847 / LMG 12228 / 1C / PRS 101 / PAO1).